We begin with the raw amino-acid sequence, 245 residues long: AA9 family lytic polysaccharide monooxygenase B (245 aa).

The first 18 residues, 1-18 (MKSAIFAAAVLGAAGVSA), serve as a signal peptide directing secretion. Residues histidine 19 and histidine 105 each contribute to the Cu(2+) site. Residues cysteine 116 and cysteine 120 are joined by a disulfide bond. O2 is bound by residues histidine 179 and glutamine 188. Residue tyrosine 190 participates in Cu(2+) binding.

Belongs to the polysaccharide monooxygenase AA9 family. Cu(2+) is required as a cofactor.

It is found in the secreted. The enzyme catalyses [(1-&gt;4)-beta-D-glucosyl]n+m + reduced acceptor + O2 = 4-dehydro-beta-D-glucosyl-[(1-&gt;4)-beta-D-glucosyl]n-1 + [(1-&gt;4)-beta-D-glucosyl]m + acceptor + H2O.. In terms of biological role, lytic polysaccharide monooxygenase (LPMO) that depolymerizes crystalline and amorphous polysaccharides via the oxidation of scissile alpha- or beta-(1-4)-glycosidic bonds, yielding C1 or C4 oxidation products. Catalysis by LPMOs requires the reduction of the active-site copper from Cu(II) to Cu(I) by a reducing agent and H(2)O(2) or O(2) as a cosubstrate. Active on hemicelluloses, including xylan, glucomannan, and xyloglucan. Has no activity on ivory nut mannan (INM), a linear beta-1,4-linked mannan without substitutions. The chain is AA9 family lytic polysaccharide monooxygenase B from Malbranchea cinnamomea (Thermophilic fungus).